A 744-amino-acid chain; its full sequence is Probable ubiquitin carboxyl-terminal hydrolase MINDY-4 (744 aa).

Ser143, Ser220, and Ser224 each carry phosphoserine. The disordered stretch occupies residues 211–358; the sequence is GMMAGPVASS…QLVSDRTDDK (148 aa). A compositionally biased stretch (low complexity) spans 265 to 277; it reads VPDSSSDSVSRSP. The span at 290–299 shows a compositional bias: polar residues; the sequence is NVTSSSQGLS. Ser295 is modified (phosphoserine). Residues 300 to 310 are compositionally biased toward basic and acidic residues; that stretch reads QRDRPRLRSVS. Residue Cys443 is the Nucleophile of the active site. His664 acts as the Proton acceptor in catalysis.

The protein belongs to the MINDY deubiquitinase family. FAM188 subfamily.

It carries out the reaction Thiol-dependent hydrolysis of ester, thioester, amide, peptide and isopeptide bonds formed by the C-terminal Gly of ubiquitin (a 76-residue protein attached to proteins as an intracellular targeting signal).. Probable hydrolase that can remove 'Lys-48'-linked conjugated ubiquitin from proteins. This Mus musculus (Mouse) protein is Probable ubiquitin carboxyl-terminal hydrolase MINDY-4 (Mindy4).